The following is a 330-amino-acid chain: Malate dehydrogenase (330 aa).

12–18 provides a ligand contact to NAD(+); that stretch reads GAAGQIG. Substrate contacts are provided by arginine 93 and arginine 99. NAD(+) contacts are provided by residues asparagine 106, glutamine 113, and 130–132; that span reads VGN. Substrate is bound by residues asparagine 132 and arginine 163. Residue histidine 188 is the Proton acceptor of the active site.

The protein belongs to the LDH/MDH superfamily. MDH type 2 family.

The enzyme catalyses (S)-malate + NAD(+) = oxaloacetate + NADH + H(+). Its function is as follows. Catalyzes the reversible oxidation of malate to oxaloacetate. The protein is Malate dehydrogenase of Thermobifida fusca (strain YX).